The chain runs to 194 residues: Probable nicotinate-nucleotide adenylyltransferase (194 aa).

This sequence belongs to the NadD family.

The catalysed reaction is nicotinate beta-D-ribonucleotide + ATP + H(+) = deamido-NAD(+) + diphosphate. The protein operates within cofactor biosynthesis; NAD(+) biosynthesis; deamido-NAD(+) from nicotinate D-ribonucleotide: step 1/1. In terms of biological role, catalyzes the reversible adenylation of nicotinate mononucleotide (NaMN) to nicotinic acid adenine dinucleotide (NaAD). The protein is Probable nicotinate-nucleotide adenylyltransferase of Brucella abortus (strain 2308).